The sequence spans 375 residues: Platelet-derived growth factor receptor-like protein (375 aa).

An N-terminal signal peptide occupies residues Met1–Gly21. Residues Thr20–Thr64 form a disordered region. The segment covering Pro40–Pro50 has biased composition (basic residues). Residues Pro62–Lys159 form the Ig-like C2-type 1 domain. Residues Cys96 and Cys143 are joined by a disulfide bond. Residues Asn132 and Asn219 are each glycosylated (N-linked (GlcNAc...) asparagine). Residues Pro272–Glu373 enclose the Ig-like C2-type 2 domain. A disulfide bond links Cys293 and Cys357.

As to quaternary structure, forms a complex composed of PDGFRL, TNK2 and GRB2.

The protein localises to the secreted. This chain is Platelet-derived growth factor receptor-like protein (PDGFRL), found in Bos taurus (Bovine).